Here is a 228-residue protein sequence, read N- to C-terminus: 2,3-bisphosphoglycerate-dependent phosphoglycerate mutase (228 aa).

Substrate contacts are provided by residues 8-15 (RHGQSEWN), 21-22 (TG), Arg60, 87-90 (ERHY), Lys98, 114-115 (RR), and 183-184 (GN). The active-site Tele-phosphohistidine intermediate is the His9. Catalysis depends on Glu87, which acts as the Proton donor/acceptor.

The protein belongs to the phosphoglycerate mutase family. BPG-dependent PGAM subfamily.

The catalysed reaction is (2R)-2-phosphoglycerate = (2R)-3-phosphoglycerate. Its pathway is carbohydrate degradation; glycolysis; pyruvate from D-glyceraldehyde 3-phosphate: step 3/5. Functionally, catalyzes the interconversion of 2-phosphoglycerate and 3-phosphoglycerate. The polypeptide is 2,3-bisphosphoglycerate-dependent phosphoglycerate mutase (Staphylococcus haemolyticus (strain JCSC1435)).